Consider the following 505-residue polypeptide: Maturase K (505 aa).

Belongs to the intron maturase 2 family. MatK subfamily.

It is found in the plastid. The protein localises to the chloroplast. In terms of biological role, usually encoded in the trnK tRNA gene intron. Probably assists in splicing its own and other chloroplast group II introns. This chain is Maturase K, found in Rosa stellata (Star rose).